A 578-amino-acid polypeptide reads, in one-letter code: Membrane protein insertase YidC (578 aa).

The helical transmembrane segment at 3–23 threads the bilayer; sequence IQRSILIVALAVVSYLLVLQW. A disordered region spans residues 34–72; it reads AASASMNTTQGLPDTPSASGTSSDVPTAQSSAAGSEAAD. Positions 37 to 66 are enriched in polar residues; sequence ASMNTTQGLPDTPSASGTSSDVPTAQSSAA. Transmembrane regions (helical) follow at residues 361 to 381, 387 to 407, 457 to 477, 500 to 520, and 535 to 555; these read LELT…FWLL, LIGN…LAFF, LGGC…YWVL, PFFI…MLNP, and PIIF…YWVV.

It belongs to the OXA1/ALB3/YidC family. Type 1 subfamily. As to quaternary structure, interacts with the Sec translocase complex via SecD. Specifically interacts with transmembrane segments of nascent integral membrane proteins during membrane integration.

The protein localises to the cell inner membrane. Required for the insertion and/or proper folding and/or complex formation of integral membrane proteins into the membrane. Involved in integration of membrane proteins that insert both dependently and independently of the Sec translocase complex, as well as at least some lipoproteins. Aids folding of multispanning membrane proteins. In Pseudomonas aeruginosa (strain ATCC 15692 / DSM 22644 / CIP 104116 / JCM 14847 / LMG 12228 / 1C / PRS 101 / PAO1), this protein is Membrane protein insertase YidC.